Consider the following 246-residue polypeptide: DNA repair protein RecO (246 aa).

Belongs to the RecO family.

Its function is as follows. Involved in DNA repair and RecF pathway recombination. This Cutibacterium acnes (strain DSM 16379 / KPA171202) (Propionibacterium acnes) protein is DNA repair protein RecO.